Here is a 229-residue protein sequence, read N- to C-terminus: Ribonuclease 3 (229 aa).

The RNase III domain maps to 7–132; the sequence is LRAFESRIGH…VIAAVYLDAG (126 aa). Mg(2+) is bound at residue Glu45. Residue Asp49 is part of the active site. Residues Asp118 and Glu121 each contribute to the Mg(2+) site. Residue Glu121 is part of the active site. Positions 157–226 constitute a DRBM domain; the sequence is DAKTALQEWA…ARALLARMEA (70 aa).

Belongs to the ribonuclease III family. As to quaternary structure, homodimer. The cofactor is Mg(2+).

The protein resides in the cytoplasm. It catalyses the reaction Endonucleolytic cleavage to 5'-phosphomonoester.. Its function is as follows. Digests double-stranded RNA. Involved in the processing of primary rRNA transcript to yield the immediate precursors to the large and small rRNAs (23S and 16S). Processes some mRNAs, and tRNAs when they are encoded in the rRNA operon. Processes pre-crRNA and tracrRNA of type II CRISPR loci if present in the organism. The polypeptide is Ribonuclease 3 (Cereibacter sphaeroides (strain ATCC 17025 / ATH 2.4.3) (Rhodobacter sphaeroides)).